Here is a 255-residue protein sequence, read N- to C-terminus: Taurine import ATP-binding protein TauB (255 aa).

Residues Leu-2–Ser-229 form the ABC transporter domain. Gly-34–Thr-41 is a binding site for ATP.

The protein belongs to the ABC transporter superfamily. Taurine importer (TC 3.A.1.17.1) family. The complex is composed of two ATP-binding proteins (TauB), two transmembrane proteins (TauC) and a solute-binding protein (TauA).

It localises to the cell inner membrane. It catalyses the reaction taurine(out) + ATP + H2O = taurine(in) + ADP + phosphate + H(+). Part of the ABC transporter complex TauABC involved in taurine import. Responsible for energy coupling to the transport system. The sequence is that of Taurine import ATP-binding protein TauB from Shigella flexneri.